Here is a 3901-residue protein sequence, read N- to C-terminus: Nonribosomal peptide synthetase opaA (3901 aa).

The tract at residues 248 to 641 is adenylation 1; it reads HNAQHHPSVV…HRKDNQIKIR (394 aa). The 75-residue stretch at 780 to 854 folds into the Carrier 1 domain; that stretch reads LPVTANEIVV…DMATRLTRIK (75 aa). Ser-815 is subject to O-(pantetheine 4'-phosphoryl)serine. Residues 891 to 1164 form a condensation 1 region; it reads DAYPCSALQE…IATVPIRINL (274 aa). An adenylation 2 region spans residues 1328–1725; the sequence is QSHAQKTPKS…GRIGNQVKLR (398 aa). In terms of domain architecture, Carrier 2 spans 1858–1936; sequence RTPLDTERDL…QIAAQAATRA (79 aa). Ser-1895 carries the post-translational modification O-(pantetheine 4'-phosphoryl)serine. Residues 1953 to 2261 are epimerase; that stretch reads KLTPIQQLFF…KDARRRLTRN (309 aa). The segment at 2403-2826 is condensation 2; the sequence is ENLYPCAPIQ…LVSTDHKRLL (424 aa). Residues 2846–3243 are adenylation 3; sequence QQHVRETPDA…GRKDSQIKIR (398 aa). The region spanning 3375 to 3451 is the Carrier 3 domain; the sequence is LPSTAGEQLL…ALAARSRSKD (77 aa). An O-(pantetheine 4'-phosphoryl)serine modification is found at Ser-3412. Positions 3509-3837 are condensation 3; the sequence is HHFSFAVEGK…EDLKTHFTLN (329 aa).

This sequence belongs to the NRP synthetase family.

Functionally, nonribosomal peptide synthetase; part of the gene cluster that mediates the biosynthesis of oxepinamides, derivatives of anthranilyl-containing tripeptides that share an oxepin ring and a fused pyrimidinone moiety. The nonribosomal peptide synthetase (NRPS) opaA assembles the quinazolinone core with D-Phe incorporation. The first adenylation domain (A1) of opaA loads and activates anthranilic acid whereas the second A domain (A2) is for activating of L-Phe, which is then converted to D-form by the E domain. The third A domain (A3) is responsible for L-Ile activation and the terminal condensation domain C3 for cyclization and releasing the NRPS product protuboxepin K. The cytochrome P450 monooxygenase opaB then catalyzes alone the oxepin ring formation to convert protuboxepin K into protuboxepin A. The flavoenzyme opaC installs subsequently one hydroxyl group at the oxepin ring, accompanied by double bond migration, to form 15-epi-oxepinamide E. The epimerase opaE changes the D-Phe residue back to L-form, leading to oxepinamide E, which is further methylated at the hydroxyl group at C-12 by the O-methyltransferase OpaF to yield oxepinamide F. This is Nonribosomal peptide synthetase opaA from Aspergillus ustus.